Reading from the N-terminus, the 726-residue chain is Catalase-peroxidase (726 aa).

The segment at residues 96–224 is a cross-link (tryptophyl-tyrosyl-methioninium (Trp-Tyr) (with M-250)); it reads WHSAGTYRIA…LAAVMMGLIY (129 aa). His97 serves as the catalytic Proton acceptor. A cross-link (tryptophyl-tyrosyl-methioninium (Tyr-Met) (with W-96)) is located at residues 224 to 250; that stretch reads YVNPEGVDGKPDPLKTAHDMRVTFARM. Position 265 (His265) interacts with heme b.

This sequence belongs to the peroxidase family. Peroxidase/catalase subfamily. As to quaternary structure, homodimer or homotetramer. The cofactor is heme b. In terms of processing, formation of the three residue Trp-Tyr-Met cross-link is important for the catalase, but not the peroxidase activity of the enzyme.

It catalyses the reaction H2O2 + AH2 = A + 2 H2O. The enzyme catalyses 2 H2O2 = O2 + 2 H2O. In terms of biological role, bifunctional enzyme with both catalase and broad-spectrum peroxidase activity. The protein is Catalase-peroxidase of Vibrio campbellii (strain ATCC BAA-1116).